Consider the following 121-residue polypeptide: MVNLLKELEQEQCRNDLPEFHVGDTIRLATKISEGGKERVQVFQGTVMARRGGGSGETVSLHRVAYGEGMEKSFLLNSPRIVSIEIVKRGKVARARLYYLRGKTGKAAKVKEFVGPRSSKK.

The protein belongs to the bacterial ribosomal protein bL19 family.

Its function is as follows. This protein is located at the 30S-50S ribosomal subunit interface and may play a role in the structure and function of the aminoacyl-tRNA binding site. The polypeptide is Large ribosomal subunit protein bL19 (rplS) (Chlamydia pneumoniae (Chlamydophila pneumoniae)).